The sequence spans 529 residues: Meiosis 1 arrest protein (529 aa).

2 disordered regions span residues 180-201 (KGIQ…DESS) and 504-529 (AASK…PSHT). Over residues 188-200 (SPSPTEEPSNDES) the composition is skewed to polar residues. Position 516 is a phosphoserine (S516).

In terms of tissue distribution, expressed in germ cells of the testis. Expressed from spermatogonia to spermatids. Expressed at very low levels in lung, stomach, thymus. Not detected in Sertoli cells.

Its subcellular location is the cytoplasm. Its function is as follows. Required for meiosis I progression during spermatogenesis. The sequence is that of Meiosis 1 arrest protein (M1ap) from Mus musculus (Mouse).